A 59-amino-acid polypeptide reads, in one-letter code: Large ribosomal subunit protein uL30 (59 aa).

It belongs to the universal ribosomal protein uL30 family. Part of the 50S ribosomal subunit.

This Staphylococcus epidermidis (strain ATCC 12228 / FDA PCI 1200) protein is Large ribosomal subunit protein uL30.